Consider the following 179-residue polypeptide: Diphosphoinositol polyphosphate phosphohydrolase 2 (179 aa).

Substrate contacts are provided by residues Arg9, 17-19 (KKR), and 38-40 (SSR). Residues 17 to 143 (KKRAACLCFR…VHAEYLEKLK (127 aa)) enclose the Nudix hydrolase domain. Residues Gly49 and Glu65 each coordinate Mg(2+). The short motif at 50–71 (GGMEPEEEPGGAAVREVYEEAG) is the Nudix box element. Glu68 serves as the catalytic Proton acceptor. A Mg(2+)-binding site is contributed by Glu69. Substrate-binding positions include 88-90 (RKH), Arg114, and Lys132.

It belongs to the Nudix hydrolase family. DIPP subfamily. Mg(2+) serves as cofactor. It depends on Mn(2+) as a cofactor.

Its subcellular location is the cytoplasm. The catalysed reaction is diphospho-myo-inositol polyphosphate + H2O = myo-inositol polyphosphate + phosphate.. The enzyme catalyses 5-diphospho-1D-myo-inositol 1,2,3,4,6-pentakisphosphate + H2O = 1D-myo-inositol hexakisphosphate + phosphate + H(+). It carries out the reaction 3,5-bis(diphospho)-1D-myo-inositol 1,2,4,6-tetrakisphosphate + H2O = 3-diphospho-1D-myo-inositol 1,2,4,5,6-pentakisphosphate + phosphate + 2 H(+). It catalyses the reaction 5-diphospho-1D-myo-inositol 1,3,4,6-tetrakisphosphate + H2O = 1D-myo-inositol 1,3,4,5,6-pentakisphosphate + phosphate + H(+). The catalysed reaction is P(1),P(6)-bis(5'-adenosyl) hexaphosphate + H2O = 2 ATP + 2 H(+). The enzyme catalyses P(1),P(5)-bis(5'-adenosyl) pentaphosphate + H2O = ADP + ATP + 2 H(+). It carries out the reaction 5-phospho-alpha-D-ribose 1-diphosphate + H2O = alpha-D-ribose 1,5-bisphosphate + phosphate + H(+). In terms of biological role, cleaves the beta-phosphate from diphosphoinositol polyphosphates such as PP-InsP5 (diphosphoinositol pentakisphosphate), PP-InsP4 (diphosphoinositol tetrakisphosphate) and [PP]2-InsP4 (bisdiphosphoinositol tetrakisphosphate), suggesting that it may play a role in signal transduction. Diadenosine polyphosphates, particularly Ap6A (P(1),P(6)-bis(5a-adenosyl) hexaphosphate) and Ap5A (P(1),P(5)-bis(5'-adenosyl) pentaphosphate) are downstream effectors of a signaling cascade that regulates cardiac KATP channels, can also be substrates, although with lower preference than the diphosphoinositol polyphosphates. Can also catalyze the hydrolysis of 5-phosphoribose 1-diphosphate, generating the glycolytic activator ribose 1,5-bisphosphate. Does not play a role in U8 snoRNA decapping activity. Binds U8 snoRNA. The protein is Diphosphoinositol polyphosphate phosphohydrolase 2 of Mus musculus (Mouse).